Consider the following 417-residue polypeptide: Gamma-glutamyl phosphate reductase (417 aa).

The protein belongs to the gamma-glutamyl phosphate reductase family.

Its subcellular location is the cytoplasm. It catalyses the reaction L-glutamate 5-semialdehyde + phosphate + NADP(+) = L-glutamyl 5-phosphate + NADPH + H(+). It participates in amino-acid biosynthesis; L-proline biosynthesis; L-glutamate 5-semialdehyde from L-glutamate: step 2/2. Functionally, catalyzes the NADPH-dependent reduction of L-glutamate 5-phosphate into L-glutamate 5-semialdehyde and phosphate. The product spontaneously undergoes cyclization to form 1-pyrroline-5-carboxylate. In Idiomarina loihiensis (strain ATCC BAA-735 / DSM 15497 / L2-TR), this protein is Gamma-glutamyl phosphate reductase.